The sequence spans 269 residues: Tryptophan synthase alpha chain (269 aa).

Residues Glu-49 and Asp-60 each act as proton acceptor in the active site.

Belongs to the TrpA family. In terms of assembly, tetramer of two alpha and two beta chains.

The catalysed reaction is (1S,2R)-1-C-(indol-3-yl)glycerol 3-phosphate + L-serine = D-glyceraldehyde 3-phosphate + L-tryptophan + H2O. The protein operates within amino-acid biosynthesis; L-tryptophan biosynthesis; L-tryptophan from chorismate: step 5/5. In terms of biological role, the alpha subunit is responsible for the aldol cleavage of indoleglycerol phosphate to indole and glyceraldehyde 3-phosphate. This Enterobacter sp. (strain 638) protein is Tryptophan synthase alpha chain.